A 511-amino-acid polypeptide reads, in one-letter code: GMP synthase [glutamine-hydrolyzing] (511 aa).

One can recognise a Glutamine amidotransferase type-1 domain in the interval 5 to 195; the sequence is LILVLDFGGQ…LYKICGCSGD (191 aa). Cys-82 functions as the Nucleophile in the catalytic mechanism. Residues His-169 and Glu-171 contribute to the active site. Residues 196-386 enclose the GMPS ATP-PPase domain; that stretch reads WKMASFIEHS…LGIPEDIVMR (191 aa). ATP is bound at residue 223–229; sequence SGGVDSS.

In terms of assembly, homodimer.

The enzyme catalyses XMP + L-glutamine + ATP + H2O = GMP + L-glutamate + AMP + diphosphate + 2 H(+). It participates in purine metabolism; GMP biosynthesis; GMP from XMP (L-Gln route): step 1/1. Functionally, catalyzes the synthesis of GMP from XMP. In Acetivibrio thermocellus (strain ATCC 27405 / DSM 1237 / JCM 9322 / NBRC 103400 / NCIMB 10682 / NRRL B-4536 / VPI 7372) (Clostridium thermocellum), this protein is GMP synthase [glutamine-hydrolyzing].